The sequence spans 381 residues: Putative glycosyltransferase EpsD (381 aa).

This sequence belongs to the glycosyltransferase group 1 family. Glycosyltransferase 4 subfamily.

Its function is as follows. May be involved in the production of the exopolysaccharide (EPS) component of the extracellular matrix during biofilm formation. EPS is responsible for the adhesion of chains of cells into bundles. Required for biofilm maintenance. The polypeptide is Putative glycosyltransferase EpsD (epsD) (Bacillus subtilis (strain 168)).